The sequence spans 300 residues: tRNA dimethylallyltransferase (300 aa).

9 to 16 (GPTASGKS) serves as a coordination point for ATP. 11-16 (TASGKS) is a binding site for substrate. An interaction with substrate tRNA region spans residues 34 to 37 (DSKQ).

This sequence belongs to the IPP transferase family. As to quaternary structure, monomer. It depends on Mg(2+) as a cofactor.

The enzyme catalyses adenosine(37) in tRNA + dimethylallyl diphosphate = N(6)-dimethylallyladenosine(37) in tRNA + diphosphate. Catalyzes the transfer of a dimethylallyl group onto the adenine at position 37 in tRNAs that read codons beginning with uridine, leading to the formation of N6-(dimethylallyl)adenosine (i(6)A). The sequence is that of tRNA dimethylallyltransferase from Ehrlichia ruminantium (strain Welgevonden).